Consider the following 521-residue polypeptide: NADH-quinone oxidoreductase subunit N (521 aa).

Helical transmembrane passes span 15 to 35 (LAPELILAAMFLILIVTDLIL), 43 to 63 (IIGWLSLAGLLLSLAAVIWRM), 98 to 118 (LLKIIFLIGTSLVVLLGLGST), 128 to 148 (AEFYYLLLPAAAGAMIMASSG), 150 to 170 (LVTLYIGLELLSITTYVLVGL), 185 to 205 (VVTGGIASAFVLFGMSYLYGV), 227 to 247 (ALVYVGFFFLIAGFGIKIAAA), 261 to 281 (PTPVSAFLAVIAKGAALAAVF), 303 to 323 (VFFALLVIAAAAMIAGTVSAL), 331 to 351 (LLALSGVANAGYLLVPIAISV), 363 to 383 (VFYLVAYLLMNVGAFAVVTVI), 406 to 426 (AAAMLIFILSFSGLPVTAGFF), 442 to 462 (WLVAIMVVSTVISYYFYFGII), and 485 to 505 (TVIWICAAATVALGVLPGPLM).

It belongs to the complex I subunit 2 family. NDH-1 is composed of 14 different subunits. Subunits NuoA, H, J, K, L, M, N constitute the membrane sector of the complex.

The protein localises to the cell membrane. It catalyses the reaction a quinone + NADH + 5 H(+)(in) = a quinol + NAD(+) + 4 H(+)(out). Functionally, NDH-1 shuttles electrons from NADH, via FMN and iron-sulfur (Fe-S) centers, to quinones in the respiratory chain. The immediate electron acceptor for the enzyme in this species is believed to be a menaquinone. Couples the redox reaction to proton translocation (for every two electrons transferred, four hydrogen ions are translocated across the cytoplasmic membrane), and thus conserves the redox energy in a proton gradient. This Paenibacillus sp. (strain JDR-2) protein is NADH-quinone oxidoreductase subunit N.